We begin with the raw amino-acid sequence, 574 residues long: 2-succinyl-5-enolpyruvyl-6-hydroxy-3-cyclohexene-1-carboxylate synthase (574 aa).

The protein belongs to the TPP enzyme family. MenD subfamily. As to quaternary structure, homodimer. It depends on Mg(2+) as a cofactor. Requires Mn(2+) as cofactor. Thiamine diphosphate serves as cofactor.

The enzyme catalyses isochorismate + 2-oxoglutarate + H(+) = 5-enolpyruvoyl-6-hydroxy-2-succinyl-cyclohex-3-ene-1-carboxylate + CO2. The protein operates within quinol/quinone metabolism; 1,4-dihydroxy-2-naphthoate biosynthesis; 1,4-dihydroxy-2-naphthoate from chorismate: step 2/7. Its pathway is quinol/quinone metabolism; menaquinone biosynthesis. Functionally, catalyzes the thiamine diphosphate-dependent decarboxylation of 2-oxoglutarate and the subsequent addition of the resulting succinic semialdehyde-thiamine pyrophosphate anion to isochorismate to yield 2-succinyl-5-enolpyruvyl-6-hydroxy-3-cyclohexene-1-carboxylate (SEPHCHC). In Vibrio atlanticus (strain LGP32) (Vibrio splendidus (strain Mel32)), this protein is 2-succinyl-5-enolpyruvyl-6-hydroxy-3-cyclohexene-1-carboxylate synthase.